The sequence spans 288 residues: Putative aryl-alcohol dehydrogenase AAD10 (288 aa).

The protein belongs to the aldo/keto reductase family. Aldo/keto reductase 2 subfamily.

This Saccharomyces cerevisiae (strain ATCC 204508 / S288c) (Baker's yeast) protein is Putative aryl-alcohol dehydrogenase AAD10 (AAD10).